An 822-amino-acid chain; its full sequence is AP-1 complex subunit gamma-1 (822 aa).

Residues 593–604 are compositionally biased toward polar residues; that stretch reads NGPSEIVQTNGE. The interval 593–627 is disordered; it reads NGPSEIVQTNGETEPAPLETKPPPSGPQPTSQAND. The region spanning 702-817 is the GAE domain; the sequence is PGIPSITAYS…QDLAEVNNFP (116 aa).

Belongs to the adaptor complexes large subunit family. As to quaternary structure, adaptor protein complex 1 (AP-1) is a heterotetramer composed of two large adaptins (gamma-type subunit AP1G1 and beta-type subunit AP1B1), a medium adaptin (mu-type subunit AP1M1 or AP1M2) and a small adaptin (sigma-type subunit AP1S1 or AP1S2 or AP1S3). Interacts (via GAE domain) with RABEP1. Interacts with EPS15. Interacts with SYNRG/gamma-synergin. Interacts (via GAE domain) with AP1AR (via coiled-coil domain). Interacts with CLN3 (via dileucine motif); this interaction facilitates lysosomal targeting. Interacts (via GAE domain) with AFTPH/aftiphilin; the interaction is required to recruit AFTPH/aftiphilin to the perinuclear region of the cell. In terms of tissue distribution, widely expressed.

It localises to the golgi apparatus. The protein resides in the cytoplasmic vesicle. Its subcellular location is the clathrin-coated vesicle membrane. It is found in the cytoplasm. The protein localises to the perinuclear region. It localises to the clathrin-coated vesicle. The protein resides in the membrane. Its subcellular location is the clathrin-coated pit. Functionally, subunit of clathrin-associated adaptor protein complex 1 that plays a role in protein sorting in the late-Golgi/trans-Golgi network (TGN) and/or endosomes. The AP complexes mediate both the recruitment of clathrin to membranes and the recognition of sorting signals within the cytosolic tails of transmembrane cargo molecules. In association with AFTPH/aftiphilin in the aftiphilin/p200/gamma-synergin complex, involved in the trafficking of transferrin from early to recycling endosomes, and the membrane trafficking of furin and the lysosomal enzyme cathepsin D between the trans-Golgi network (TGN) and endosomes. The chain is AP-1 complex subunit gamma-1 (Ap1g1) from Mus musculus (Mouse).